We begin with the raw amino-acid sequence, 1487 residues long: MIERGKYQSLTMVNWNGFFARTFDIDGLVTTLSGGNGAGKSTTMAAFITALIPDQSLLHFRNTTEAGSSQASRDKGLYGKLQPGACYAALDVVNSRNQRLLFAVKLQQVAGRDKKVDIKPFVIQGLPSHVKPTDVLIESVSATQARVRQINEVKESVAQYEGVQFKSFSSIVDYHAQMFEFGVIPKKLRNSSDRSKFYRLIEASLYGGISSAITRSLRDYLLPQNGGVKKAFQDMESALRENRMTLEAIKTTQADRDLFKHLITESTNYVAADYMRHANERHKKLEQSLSLRSELFSSRETLIEQNRLLNQVQQELEMLVESESALEQDYQGASDHLQLVQNALRQQEKIERYQEDLEELNERLEEQSMVVEEAQERVLMAEEQSTVAENEVDSLKTQLADYQQALDVQQTRALQYQQAVQALEKAKVLLSDSTLTAESAQALVAQLTQSEAEQTQALLALKHKLDMSSAAAQQFENALKLVHSIAGQVERAEASRYAKAAIQQARSAQQVVQNENQWRAQHRDLERSLNQQNQAQALVAEYQKAHQVTLDDEVMFEQERERHHAQLDSLEIALEENRELRSEQRRQEQDLQSDITQLQAIAPKWIAANDALEKLREQSGAELADSQSVMSQMQQVLEQEKQLSQAKDKLAERRSQLESEIERLASPGGSNDPRLKGLADTLGGVLLSEIYDDITIDDAPYFSAMYGPARHAIVVSDLSGIEEKLVELDDCPEDLYIIEGDVDAFDDSSIKAEELEGAVCVRLNDRQMRYSRFPVIPLFGRAAREQRLELLRSEREEVVEKHAKAAFDAQKMQRLFQAFNQFVAEHIQVAFAADPEQALVIARDKRNQLTRTLAELEAKEQQMRSQIQNSKQALTMLDKLAPMMAVISDDTIGERFAELEEKIAQLADAKQFLNAHAKAVEQLESQLAVLDADPEQFDALEAQYQSADSQLQALKKQIFALSDLVERRHYFAYADSVDLLSKSSELSEQLKAKLVEAERTRSRYRDELKQQQEQMNQYNQVLASLKSSYQAKLETVQEFKQELAEFGVSADEGALERAIRRRDELHERLHTSRSRKSEYERTLTSTELGMKELAKRLKKVQKEYVELRTFVVAAKAGWCSVLRLARENDVERRLHKRELAYLSAGELRSMSDKSLGALRLAVANNDDLRDALRLSEDNARPERKVLFYIAVYQHLRERIRQDIIHTDDPVEAIEEMEVELARLTEELTMRENRLAISSESVASIIKKTIQREQNRIRMLNQGLSNISFGQVKGVRLNVKVRESHEVLLNGLATQQEQHKDLFETARYTFSEAMAKLFQRVNPHIDMGQRSPQVLGEELLDYRNYLELSIEVNRGSDGWLQAESGALSTGEAIGTGQSILLMVVQSWEEESRRLRSKDIVPCRLLFLDEAARLDAKSISTLFELCDRLDMQLLIAAPENISPEKGTTYKLVRKVFKDHEHVHVVGLRGFGQEQKPKSEAQQMIEEFEA.

Residue Gly-34 to Ser-41 coordinates ATP. Coiled-coil stretches lie at residues Ser-297 to Ala-426, Ala-460 to Ser-666, Arg-781 to Ala-806, Glu-836 to Val-1111, and Val-1210 to Ile-1266. A flexible hinge region spans residues Pro-667–Arg-784.

The protein belongs to the SMC family. MukB subfamily. In terms of assembly, homodimerization via its hinge domain. Binds to DNA via its C-terminal region. Interacts, and probably forms a ternary complex, with MukE and MukF via its C-terminal region. The complex formation is stimulated by calcium or magnesium. Interacts with tubulin-related protein FtsZ.

It localises to the cytoplasm. It is found in the nucleoid. Its function is as follows. Plays a central role in chromosome condensation, segregation and cell cycle progression. Functions as a homodimer, which is essential for chromosome partition. Involved in negative DNA supercoiling in vivo, and by this means organize and compact chromosomes. May achieve or facilitate chromosome segregation by condensation DNA from both sides of a centrally located replisome during cell division. The sequence is that of Chromosome partition protein MukB from Vibrio vulnificus (strain YJ016).